The chain runs to 208 residues: ATP-dependent Clp protease proteolytic subunit (208 aa).

The Nucleophile role is filled by serine 98. Histidine 123 is a catalytic residue.

Belongs to the peptidase S14 family. In terms of assembly, fourteen ClpP subunits assemble into 2 heptameric rings which stack back to back to give a disk-like structure with a central cavity, resembling the structure of eukaryotic proteasomes.

The protein resides in the cytoplasm. The enzyme catalyses Hydrolysis of proteins to small peptides in the presence of ATP and magnesium. alpha-casein is the usual test substrate. In the absence of ATP, only oligopeptides shorter than five residues are hydrolyzed (such as succinyl-Leu-Tyr-|-NHMec, and Leu-Tyr-Leu-|-Tyr-Trp, in which cleavage of the -Tyr-|-Leu- and -Tyr-|-Trp bonds also occurs).. Cleaves peptides in various proteins in a process that requires ATP hydrolysis. Has a chymotrypsin-like activity. Plays a major role in the degradation of misfolded proteins. The sequence is that of ATP-dependent Clp protease proteolytic subunit from Wolbachia sp. subsp. Brugia malayi (strain TRS).